A 720-amino-acid polypeptide reads, in one-letter code: 1,4-alpha-glucan branching enzyme GlgB 2 (720 aa).

Asp-398 serves as the catalytic Nucleophile. Glu-451 (proton donor) is an active-site residue.

Belongs to the glycosyl hydrolase 13 family. GlgB subfamily. Monomer.

The catalysed reaction is Transfers a segment of a (1-&gt;4)-alpha-D-glucan chain to a primary hydroxy group in a similar glucan chain.. Its pathway is glycan biosynthesis; glycogen biosynthesis. In terms of biological role, catalyzes the formation of the alpha-1,6-glucosidic linkages in glycogen by scission of a 1,4-alpha-linked oligosaccharide from growing alpha-1,4-glucan chains and the subsequent attachment of the oligosaccharide to the alpha-1,6 position. The protein is 1,4-alpha-glucan branching enzyme GlgB 2 of Xanthomonas oryzae pv. oryzae (strain KACC10331 / KXO85).